The chain runs to 883 residues: DNA mismatch repair protein MutS (883 aa).

633-640 is an ATP binding site; sequence GPNMGGKS.

This sequence belongs to the DNA mismatch repair MutS family.

Functionally, this protein is involved in the repair of mismatches in DNA. It is possible that it carries out the mismatch recognition step. This protein has a weak ATPase activity. The polypeptide is DNA mismatch repair protein MutS (Bordetella pertussis (strain Tohama I / ATCC BAA-589 / NCTC 13251)).